We begin with the raw amino-acid sequence, 740 residues long: Alpha-1,6-mannosylglycoprotein 6-beta-N-acetylglucosaminyltransferase A (740 aa).

Residues 1-13 lie on the Cytoplasmic side of the membrane; it reads MAFFTPWKLSSQK. A helical; Signal-anchor for type II membrane protein membrane pass occupies residues 14–30; that stretch reads LGFFLVTFGFIWGMMLL. At 31–740 the chain is on the lumenal side; the sequence is HFTIQQRTQP…GQVALCKDCL (710 aa). N-linked (GlcNAc...) asparagine glycosylation is found at N109, N114, and N117. Cystine bridges form between C144-C182, C155-C195, C171-C337, C371-C625, C648-C723, C652-C725, C659-C712, C680-C701, and C736-C739. Residues 212 to 740 are sufficient for catalytic activity; sequence NSLAEIRTDF…GQVALCKDCL (529 aa). N333 carries N-linked (GlcNAc...) asparagine glycosylation. 377-378 is a substrate binding site; sequence DS. N432 and N446 each carry an N-linked (GlcNAc...) asparagine glycan. Residue E525 participates in UDP-N-acetyl-alpha-D-glucosamine binding. Substrate is bound at residue K553.

Belongs to the glycosyltransferase 18 family. In terms of processing, N-glycosylated. A secreted form is released from the membrane after cleavage by gamma-secretase.

Its subcellular location is the golgi apparatus membrane. It localises to the secreted. The catalysed reaction is N(4)-{beta-D-GlcNAc-(1-&gt;2)-[beta-D-GlcNAc-(1-&gt;4)]-alpha-D-Man-(1-&gt;3)-[beta-D-GlcNAc-(1-&gt;2)-alpha-D-Man-(1-&gt;6)]-beta-D-Man-(1-&gt;4)-beta-D-GlcNAc-(1-&gt;4)-beta-D-GlcNAc}-L-asparaginyl-[protein] + UDP-N-acetyl-alpha-D-glucosamine = N(4)-{beta-D-GlcNAc-(1-&gt;2)-[beta-D-GlcNAc-(1-&gt;4)]-alpha-D-Man-(1-&gt;3)-[beta-D-GlcNAc-(1-&gt;2)-[beta-D-GlcNAc-(1-&gt;6)]-alpha-D-Man-(1-&gt;6)]-beta-D-Man-(1-&gt;4)-beta-D-GlcNAc-(1-&gt;4)-beta-D-GlcNAc}-L-asparaginyl-[protein] + UDP + H(+). It functions in the pathway protein modification; protein glycosylation. Catalyzes the addition of N-acetylglucosamine (GlcNAc) in beta 1-6 linkage to the alpha-linked mannose of biantennary N-linked oligosaccharides. Catalyzes an important step in the biosynthesis of branched, complex-type N-glycans, such as those found on EGFR, TGFR (TGF-beta receptor) and CDH2. Via its role in the biosynthesis of complex N-glycans, plays an important role in the activation of cellular signaling pathways, reorganization of the actin cytoskeleton, cell-cell adhesion and cell migration. MGAT5-dependent EGFR N-glycosylation enhances the interaction between EGFR and LGALS3 and thereby prevents rapid EGFR endocytosis and prolongs EGFR signaling. Required for efficient interaction between TGFB1 and its receptor. Enhances activation of intracellular signaling pathways by several types of growth factors, including FGF2, PDGF, IGF, TGFB1 and EGF. MGAT5-dependent CDH2 N-glycosylation inhibits CDH2-mediated homotypic cell-cell adhesion and contributes to the regulation of downstream signaling pathways. Promotes cell migration. Contributes to the regulation of the inflammatory response. MGAT5-dependent TCR N-glycosylation enhances the interaction between TCR and LGALS3, limits agonist-induced TCR clustering, and thereby dampens TCR-mediated responses to antigens. Required for normal leukocyte evasation and accumulation at sites of inflammation. Inhibits attachment of monocytes to the vascular endothelium and subsequent monocyte diapedesis. In terms of biological role, promotes proliferation of umbilical vein endothelial cells and angiogenesis, at least in part by promoting the release of the growth factor FGF2 from the extracellular matrix. In Cricetulus griseus (Chinese hamster), this protein is Alpha-1,6-mannosylglycoprotein 6-beta-N-acetylglucosaminyltransferase A (MGAT5).